The following is a 483-amino-acid chain: Protein LMBR1L (483 aa).

Over Met-1–Cys-21 the chain is Extracellular. The chain crosses the membrane as a helical span at residues Ile-22 to Phe-42. At Lys-43–Arg-60 the chain is on the cytoplasmic side. A helical transmembrane segment spans residues Ile-61–Pro-81. Residues Phe-82–Asn-112 are Extracellular-facing. The helical transmembrane segment at Leu-113–Thr-133 threads the bilayer. Residues Glu-134–Thr-153 are Cytoplasmic-facing. A helical membrane pass occupies residues Val-154–Phe-174. Residues Asp-175–Tyr-194 are Extracellular-facing. The chain crosses the membrane as a helical span at residues Leu-195 to Leu-215. The Cytoplasmic segment spans residues Ser-216 to Asn-294. Residues Leu-295–Val-315 traverse the membrane as a helical segment. Over Cys-316–Ser-342 the chain is Extracellular. The helical transmembrane segment at Phe-343–Ala-363 threads the bilayer. At Ser-364–Pro-386 the chain is on the cytoplasmic side. Residues Met-387 to Phe-407 form a helical membrane-spanning segment. The Extracellular segment spans residues Ser-408 to Gly-429. Residues Asn-430 to Val-450 traverse the membrane as a helical segment. Residues Lys-451–Ala-483 are Cytoplasmic-facing.

It belongs to the LIMR family. Dimer. Can also form higher oligomers.

It is found in the cell membrane. The protein localises to the endoplasmic reticulum membrane. May play a role in lymphocyte development by negatively regulating the canonical Wnt signaling pathway. May act as a LCN1 receptor. The sequence is that of Protein LMBR1L (lmbr1l) from Xenopus laevis (African clawed frog).